The sequence spans 401 residues: Lipid-A-disaccharide synthase (401 aa).

It belongs to the LpxB family.

It carries out the reaction a lipid X + a UDP-2-N,3-O-bis[(3R)-3-hydroxyacyl]-alpha-D-glucosamine = a lipid A disaccharide + UDP + H(+). It participates in bacterial outer membrane biogenesis; LPS lipid A biosynthesis. Condensation of UDP-2,3-diacylglucosamine and 2,3-diacylglucosamine-1-phosphate to form lipid A disaccharide, a precursor of lipid A, a phosphorylated glycolipid that anchors the lipopolysaccharide to the outer membrane of the cell. This is Lipid-A-disaccharide synthase from Rhodospirillum centenum (strain ATCC 51521 / SW).